Consider the following 426-residue polypeptide: Elongation factor 1-alpha (426 aa).

The tr-type G domain occupies 5–221; that stretch reads KPHMNLAVIG…DTFKEPDKPT (217 aa). A G1 region spans residues 14–21; sequence GHIDHGKS. 14–21 is a GTP binding site; it reads GHIDHGKS. Ser-21 is a Mg(2+) binding site. Residues 70-74 form a G2 region; that stretch reads GITID. A G3 region spans residues 91–94; the sequence is DCPG. GTP contacts are provided by residues 91 to 95 and 146 to 149; these read DCPGH and NKMD. Residues 146-149 are G4; sequence NKMD. Positions 185–187 are G5; sequence SSF.

This sequence belongs to the TRAFAC class translation factor GTPase superfamily. Classic translation factor GTPase family. EF-Tu/EF-1A subfamily.

The protein localises to the cytoplasm. The enzyme catalyses GTP + H2O = GDP + phosphate + H(+). Its function is as follows. GTP hydrolase that promotes the GTP-dependent binding of aminoacyl-tRNA to the A-site of ribosomes during protein biosynthesis. The polypeptide is Elongation factor 1-alpha (Methanosphaerula palustris (strain ATCC BAA-1556 / DSM 19958 / E1-9c)).